A 290-amino-acid chain; its full sequence is PIH1 domain-containing protein 1 (290 aa).

Over residues 34-50 (ELQQAQTSRPESTQIQP) the composition is skewed to polar residues. The disordered stretch occupies residues 34–53 (ELQQAQTSRPESTQIQPQPG). The residue at position 173 (Ser173) is a Phosphoserine.

It belongs to the PIH1 family. In terms of assembly, component of the R2TP complex composed at least of RUVBL1, RUVBL2, RPAP3 and PIHD1. Component of the PAQosome complex which is responsible for the biogenesis of several protein complexes and which consists of R2TP complex members RUVBL1, RUVBL2, RPAP3 and PIH1D1, URI complex members PFDN2, PFDN6, PDRG1, UXT and URI1 as well as ASDURF, POLR2E and DNAAF10/WDR92. Interacts with phosphorylated TELO2 and mediates interaction of TELO2 with the R2TP complex. Interacts with phosphorylated ECD, EFTUD2/SNRP116, RPB1 and UBR5 and with RPB1 in a phosphorylation-independent manner. Interacts with the core C/D box snoRNP particle components NOP58 and FBL and with RUVBL1/TIP49. Interacts with RPAP3 and DNAAF10. Interacts with histone H4 and with SWI/SNF complex member SMARCB1/SNF5. Interacts with the mTORC1 complex member RPTOR. Interacts with MSL1.

It is found in the nucleus. Its function is as follows. Involved in the assembly of C/D box small nucleolar ribonucleoprotein (snoRNP) particles. Recruits the SWI/SNF complex to the core promoter of rRNA genes and enhances pre-rRNA transcription. Mediates interaction of TELO2 with the R2TP complex which is necessary for the stability of MTOR and SMG1. Positively regulates the assembly and activity of the mTORC1 complex. The sequence is that of PIH1 domain-containing protein 1 (PIH1D1) from Bos taurus (Bovine).